The primary structure comprises 425 residues: Protein CLP1 homolog (425 aa).

ATP is bound by residues Glu18, Lys59, and 121–126 (DVGKST).

This sequence belongs to the Clp1 family. Clp1 subfamily.

It localises to the nucleus. Its function is as follows. Required for endonucleolytic cleavage during polyadenylation-dependent pre-mRNA 3'-end formation. This chain is Protein CLP1 homolog (cbc), found in Drosophila mojavensis (Fruit fly).